Here is a 247-residue protein sequence, read N- to C-terminus: 2,5-diamino-6-ribosylamino-4(3H)-pyrimidinone 5'-phosphate reductase (247 aa).

Residues Thr75, Asp79, Gly165, and Gly187–Ile191 contribute to the NADP(+) site.

The protein belongs to the HTP reductase family. In terms of assembly, homodimer.

The catalysed reaction is 2,5-diamino-6-(1-D-ribitylamino)pyrimidin-4(3H)-one 5'-phosphate + NADP(+) = 2,5-diamino-6-(1-D-ribosylamino)pyrimidin-4(3H)-one 5'-phosphate + NADPH + H(+). The enzyme catalyses 2,5-diamino-6-(1-D-ribitylamino)pyrimidin-4(3H)-one 5'-phosphate + NAD(+) = 2,5-diamino-6-(1-D-ribosylamino)pyrimidin-4(3H)-one 5'-phosphate + NADH + H(+). It participates in cofactor biosynthesis; riboflavin biosynthesis. In terms of biological role, catalyzes an early step in riboflavin biosynthesis, the NADPH-dependent reduction of the ribose side chain of 2,5-diamino-6-ribosylamino-4(3H)-pyrimidinone 5'-phosphate, yielding 2,5-diamino-6-ribitylamino-4(3H)-pyrimidinone 5'-phosphate. In Debaryomyces hansenii (strain ATCC 36239 / CBS 767 / BCRC 21394 / JCM 1990 / NBRC 0083 / IGC 2968) (Yeast), this protein is 2,5-diamino-6-ribosylamino-4(3H)-pyrimidinone 5'-phosphate reductase (RIB7).